Reading from the N-terminus, the 99-residue chain is MSRRCAVTGKGVQTGNNVSHSNIKSRRRFLPNLQVNSLMSDLLREPVRMRLSAHGLRTVEHRGGIDAFLLSTPSVELTVELRKVKRRMVKIRDAAAAAA.

The protein belongs to the bacterial ribosomal protein bL28 family.

The chain is Large ribosomal subunit protein bL28 from Rhodospirillum rubrum (strain ATCC 11170 / ATH 1.1.1 / DSM 467 / LMG 4362 / NCIMB 8255 / S1).